The chain runs to 265 residues: MRILMNKFVGAVQLIIDIGNTSISFALYRLDKMQIYCKLGTKRDLSFKELYKFLKVKFDYKVDQVFVSSVVPVIDTVLINAIVSLYKVNPLFIRFDLSYDLSFNLYNNNRFVLGSDVFANLVGAIEYYNINDALVVDLGTACTIFAISRREGILGGLINGGPFTDLNALIQNAYLLNDFNLAVPKKLLGLSTIDSVNSGVIYQYKYLIEGVYHELRHNYDKEFRLIITGGNSYLVLPLISVDFIANLYLTLEGIRILGNAFKGDY.

17–24 (DIGNTSIS) contacts ATP. 114–117 (GSDV) lines the substrate pocket. Asp116 serves as the catalytic Proton acceptor. Asp137 serves as a coordination point for K(+). Position 140 (Thr140) interacts with ATP. A substrate-binding site is contributed by Thr192.

This sequence belongs to the type III pantothenate kinase family. In terms of assembly, homodimer. The cofactor is NH4(+). K(+) is required as a cofactor.

The protein resides in the cytoplasm. It catalyses the reaction (R)-pantothenate + ATP = (R)-4'-phosphopantothenate + ADP + H(+). Its pathway is cofactor biosynthesis; coenzyme A biosynthesis; CoA from (R)-pantothenate: step 1/5. Functionally, catalyzes the phosphorylation of pantothenate (Pan), the first step in CoA biosynthesis. The chain is Type III pantothenate kinase from Borrelia hermsii (strain HS1 / DAH).